Reading from the N-terminus, the 1576-residue chain is DNA-directed RNA polymerase subunit beta' (1576 aa).

Residues cysteine 64, cysteine 66, cysteine 79, and cysteine 82 each coordinate Zn(2+). Mg(2+)-binding residues include aspartate 590, aspartate 592, and aspartate 594. 4 residues coordinate Zn(2+): cysteine 928, cysteine 1002, cysteine 1009, and cysteine 1012.

It belongs to the RNA polymerase beta' chain family. In terms of assembly, the RNAP catalytic core consists of 2 alpha, 1 beta, 1 beta' and 1 omega subunit. When a sigma factor is associated with the core the holoenzyme is formed, which can initiate transcription. Requires Mg(2+) as cofactor. Zn(2+) serves as cofactor.

The enzyme catalyses RNA(n) + a ribonucleoside 5'-triphosphate = RNA(n+1) + diphosphate. DNA-dependent RNA polymerase catalyzes the transcription of DNA into RNA using the four ribonucleoside triphosphates as substrates. The polypeptide is DNA-directed RNA polymerase subunit beta' (Aquifex pyrophilus).